The chain runs to 317 residues: Electron transfer flavoprotein subunit alpha (317 aa).

The protein belongs to the ETF alpha-subunit/FixB family. As to quaternary structure, heterodimer of an alpha and a beta subunit. It depends on FAD as a cofactor.

Its subcellular location is the cytoplasm. The protein operates within lipid metabolism; butanoate metabolism. Functionally, part of an electron transfer flavoprotein involved in syntrophic growth of S.wolfei with butyrate. Probably receives electrons from butyryl-CoA dehydrogenases, and transfers them to the membrane-bound quinone oxidoreductase Swol_0698. The chain is Electron transfer flavoprotein subunit alpha from Syntrophomonas wolfei subsp. wolfei (strain DSM 2245B / Goettingen).